Consider the following 140-residue polypeptide: Nucleoside diphosphate kinase (140 aa).

Positions 11, 59, 87, 93, 104, and 114 each coordinate ATP. The active-site Pros-phosphohistidine intermediate is H117.

This sequence belongs to the NDK family. Homotetramer. It depends on Mg(2+) as a cofactor.

Its subcellular location is the cytoplasm. The enzyme catalyses a 2'-deoxyribonucleoside 5'-diphosphate + ATP = a 2'-deoxyribonucleoside 5'-triphosphate + ADP. The catalysed reaction is a ribonucleoside 5'-diphosphate + ATP = a ribonucleoside 5'-triphosphate + ADP. In terms of biological role, major role in the synthesis of nucleoside triphosphates other than ATP. The ATP gamma phosphate is transferred to the NDP beta phosphate via a ping-pong mechanism, using a phosphorylated active-site intermediate. The chain is Nucleoside diphosphate kinase from Gluconacetobacter diazotrophicus (strain ATCC 49037 / DSM 5601 / CCUG 37298 / CIP 103539 / LMG 7603 / PAl5).